Reading from the N-terminus, the 159-residue chain is Ribosomal RNA large subunit methyltransferase H (159 aa).

S-adenosyl-L-methionine contacts are provided by residues Leu-76, Gly-108, and Phe-127–Phe-132.

Belongs to the RNA methyltransferase RlmH family. In terms of assembly, homodimer.

The protein localises to the cytoplasm. The enzyme catalyses pseudouridine(1915) in 23S rRNA + S-adenosyl-L-methionine = N(3)-methylpseudouridine(1915) in 23S rRNA + S-adenosyl-L-homocysteine + H(+). Specifically methylates the pseudouridine at position 1915 (m3Psi1915) in 23S rRNA. This is Ribosomal RNA large subunit methyltransferase H from Clostridium tetani (strain Massachusetts / E88).